A 258-amino-acid polypeptide reads, in one-letter code: Steroid 5-alpha-reductase DET2 (258 aa).

Transmembrane regions (helical) follow at residues 8–28 (FHYC…SLYF), 49–69 (LAWF…FPSG), 77–97 (SFLL…LYPL), 109–129 (FPVS…YLQA), 144–164 (LFWW…WVNV), and 201–221 (IMEW…GFFL).

This sequence belongs to the steroid 5-alpha reductase family. As to expression, accumulates in fibers (seed trichomes) during both their initiation and elongation phases. Also present in roots, hypocotyls, leaves, flowers and ovules, and barely in cotyledons.

The protein resides in the membrane. It catalyses the reaction a 3-oxo-5alpha-steroid + NADP(+) = a 3-oxo-Delta(4)-steroid + NADPH + H(+). It functions in the pathway plant hormone biosynthesis; brassinosteroid biosynthesis. In terms of biological role, involved in a reduction step in the biosynthesis of the plant steroid, brassinolide (BL). Promotes cotton fibers (seed trichomes) initiation and elongation. The protein is Steroid 5-alpha-reductase DET2 of Gossypium hirsutum (Upland cotton).